The sequence spans 383 residues: Acetylornithine deacetylase (383 aa).

Residue histidine 80 participates in Zn(2+) binding. The active site involves aspartate 82. Aspartate 112 is a binding site for Zn(2+). The active site involves glutamate 144. Residues glutamate 145, glutamate 169, and histidine 355 each coordinate Zn(2+).

This sequence belongs to the peptidase M20A family. ArgE subfamily. As to quaternary structure, homodimer. Requires Zn(2+) as cofactor. Co(2+) is required as a cofactor. Glutathione serves as cofactor.

It is found in the cytoplasm. It catalyses the reaction N(2)-acetyl-L-ornithine + H2O = L-ornithine + acetate. It functions in the pathway amino-acid biosynthesis; L-arginine biosynthesis; L-ornithine from N(2)-acetyl-L-ornithine (linear): step 1/1. Functionally, catalyzes the hydrolysis of the amide bond of N(2)-acetylated L-amino acids. Cleaves the acetyl group from N-acetyl-L-ornithine to form L-ornithine, an intermediate in L-arginine biosynthesis pathway, and a branchpoint in the synthesis of polyamines. The polypeptide is Acetylornithine deacetylase (Escherichia coli O45:K1 (strain S88 / ExPEC)).